The chain runs to 271 residues: GPN-loop GTPase 3 (271 aa).

13 to 18 provides a ligand contact to GTP; that stretch reads GAGKST. Residues 70 to 72 carry the Gly-Pro-Asn (GPN)-loop; involved in dimer interface motif; it reads GPN. GTP is bound at residue 173 to 176; sequence SKLD.

The protein belongs to the GPN-loop GTPase family. Heterodimers with GPN1 or GPN2. Binds to RNA polymerase II (RNAPII).

In terms of biological role, small GTPase required for proper nuclear import of RNA polymerase II and III (RNAPII and RNAPIII). May act at an RNAP assembly step prior to nuclear import. The polypeptide is GPN-loop GTPase 3 (Candida glabrata (strain ATCC 2001 / BCRC 20586 / JCM 3761 / NBRC 0622 / NRRL Y-65 / CBS 138) (Yeast)).